Here is a 474-residue protein sequence, read N- to C-terminus: tRNA modification GTPase MnmE (474 aa).

Positions 25, 82, and 123 each coordinate (6S)-5-formyl-5,6,7,8-tetrahydrofolate. In terms of domain architecture, TrmE-type G spans 219-386; it reads GIKVVIAGKP…LKKHLYDSAM (168 aa). Residue Asn-229 participates in K(+) binding. GTP contacts are provided by residues 229–234, 248–254, and 273–276; these read NAGKSS, SNISGTT, and DTAG. Residue Ser-233 participates in Mg(2+) binding. Positions 248, 250, and 253 each coordinate K(+). Mg(2+) is bound at residue Thr-254. (6S)-5-formyl-5,6,7,8-tetrahydrofolate is bound at residue Lys-474.

The protein belongs to the TRAFAC class TrmE-Era-EngA-EngB-Septin-like GTPase superfamily. TrmE GTPase family. Homodimer. Heterotetramer of two MnmE and two MnmG subunits. K(+) is required as a cofactor.

The protein resides in the cytoplasm. Exhibits a very high intrinsic GTPase hydrolysis rate. Involved in the addition of a carboxymethylaminomethyl (cmnm) group at the wobble position (U34) of certain tRNAs, forming tRNA-cmnm(5)s(2)U34. The protein is tRNA modification GTPase MnmE of Blochmanniella floridana.